A 568-amino-acid chain; its full sequence is 2-succinyl-5-enolpyruvyl-6-hydroxy-3-cyclohexene-1-carboxylate synthase (568 aa).

This sequence belongs to the TPP enzyme family. MenD subfamily. Homodimer. The cofactor is Mg(2+). It depends on Mn(2+) as a cofactor. Thiamine diphosphate serves as cofactor.

The catalysed reaction is isochorismate + 2-oxoglutarate + H(+) = 5-enolpyruvoyl-6-hydroxy-2-succinyl-cyclohex-3-ene-1-carboxylate + CO2. It participates in quinol/quinone metabolism; 1,4-dihydroxy-2-naphthoate biosynthesis; 1,4-dihydroxy-2-naphthoate from chorismate: step 2/7. It functions in the pathway quinol/quinone metabolism; menaquinone biosynthesis. Its function is as follows. Catalyzes the thiamine diphosphate-dependent decarboxylation of 2-oxoglutarate and the subsequent addition of the resulting succinic semialdehyde-thiamine pyrophosphate anion to isochorismate to yield 2-succinyl-5-enolpyruvyl-6-hydroxy-3-cyclohexene-1-carboxylate (SEPHCHC). In Histophilus somni (strain 2336) (Haemophilus somnus), this protein is 2-succinyl-5-enolpyruvyl-6-hydroxy-3-cyclohexene-1-carboxylate synthase.